Here is a 258-residue protein sequence, read N- to C-terminus: MVASRTSADGGMETSYGFRDVAEGEKQGLVNDVFHKVAKRYDIMNDVMSAGMHRVWKDALIAALNPRKDAGYKVLDVAGGTGDIAFRIIEASRRLAHATVLDINGSMLGVGQERAQKKGLSDNLTFVEANAEALPFEANQFDAYTIAFGIRNVPRIDVALSEAYRVLKRGGRLLVLEFSEVQMPLLDRFYDQWSFKAIPRFGKMITGEAEPYQYLVESIRKFPNQQDFAAMITKAGFSKVSFTNYTGGIAALHSGWKI.

S-adenosyl-L-methionine-binding positions include threonine 81, aspartate 102, and 130–131; that span reads NA.

Belongs to the class I-like SAM-binding methyltransferase superfamily. MenG/UbiE family.

The enzyme catalyses a 2-demethylmenaquinol + S-adenosyl-L-methionine = a menaquinol + S-adenosyl-L-homocysteine + H(+). It catalyses the reaction a 2-methoxy-6-(all-trans-polyprenyl)benzene-1,4-diol + S-adenosyl-L-methionine = a 5-methoxy-2-methyl-3-(all-trans-polyprenyl)benzene-1,4-diol + S-adenosyl-L-homocysteine + H(+). The protein operates within quinol/quinone metabolism; menaquinone biosynthesis; menaquinol from 1,4-dihydroxy-2-naphthoate: step 2/2. It functions in the pathway cofactor biosynthesis; ubiquinone biosynthesis. Functionally, methyltransferase required for the conversion of demethylmenaquinol (DMKH2) to menaquinol (MKH2) and the conversion of 2-polyprenyl-6-methoxy-1,4-benzoquinol (DDMQH2) to 2-polyprenyl-3-methyl-6-methoxy-1,4-benzoquinol (DMQH2). The sequence is that of Ubiquinone/menaquinone biosynthesis C-methyltransferase UbiE from Allorhizobium ampelinum (strain ATCC BAA-846 / DSM 112012 / S4) (Agrobacterium vitis (strain S4)).